A 694-amino-acid polypeptide reads, in one-letter code: Polynucleotide 3'-phosphatase ZDP (694 aa).

PARP-type zinc fingers lie at residues 50–132 and 165–247; these read VVAE…EQCG and VIAD…EVNK. Zn(2+) is bound by residues Cys-62, Cys-65, His-93, Cys-96, Cys-177, Cys-180, His-208, and Cys-211. The segment at 266 to 331 is disordered; the sequence is AIADNELTEE…SPDSSKVISE (66 aa). Residues 302–321 show a composition bias toward basic and acidic residues; it reads ESKKPASDEISEQKTKDVKN. Over residues 322–331 the composition is skewed to polar residues; it reads SPDSSKVISE. The PARP-type 3 zinc finger occupies 328–410; it reads VISEYAKSSR…ALKELVQQCG (83 aa). The Zn(2+) site is built by Cys-340, Cys-343, His-371, and Cys-374.

This sequence in the C-terminal section; belongs to the DNA 3' phosphatase family. As to quaternary structure, interacts with ROS1 (via the central region). Binds to XRCC1.

It is found in the nucleus. The protein resides in the nucleoplasm. It carries out the reaction a 3'end (2'-deoxyribonucleotide 3'-phosphate)-DNA + H2O = a 3'-end 2'-deoxyribonucleotide-DNA + phosphate. Activated by the presence of DNA. Stimulated by XRCC1. Nick-sensing 3'-phosphoesterase involved in a base excision repair pathway required for active DNA demethylation. The N-terminal DNA-binding domain binds specifically to gap sites and sharply bends the target DNA. Lacks 5'-kinase activity but is capable of 3'-phosphoglycolate end processing. Inactive on 3'-alpha,beta-unsaturated aldehyde (3'-dRP). Protects partially genes from transcriptional silencing by preventing promoter DNA hypermethylation. The polypeptide is Polynucleotide 3'-phosphatase ZDP (ZDP) (Arabidopsis thaliana (Mouse-ear cress)).